Consider the following 173-residue polypeptide: tRNA-specific adenosine deaminase (173 aa).

The 113-residue stretch at 9–121 (EFDEKMMRYA…DYKTGAIGSR (113 aa)) folds into the CMP/dCMP-type deaminase domain. Zn(2+) is bound at residue histidine 61. Glutamate 63 (proton donor) is an active-site residue. Zn(2+) is bound by residues cysteine 91 and cysteine 94.

Belongs to the cytidine and deoxycytidylate deaminase family. Homodimer. The cofactor is Zn(2+).

The enzyme catalyses adenosine(34) in tRNA + H2O + H(+) = inosine(34) in tRNA + NH4(+). In terms of biological role, catalyzes the deamination of adenosine to inosine at the wobble position 34 of tRNA(Arg2). The chain is tRNA-specific adenosine deaminase from Haemophilus influenzae (strain ATCC 51907 / DSM 11121 / KW20 / Rd).